The following is a 368-amino-acid chain: tRNA/tmRNA (uracil-C(5))-methyltransferase (368 aa).

The S-adenosyl-L-methionine site is built by Gln190, Tyr218, Asn223, Glu239, and Asp301. Cys326 functions as the Nucleophile in the catalytic mechanism. Catalysis depends on Glu360, which acts as the Proton acceptor.

This sequence belongs to the class I-like SAM-binding methyltransferase superfamily. RNA M5U methyltransferase family. TrmA subfamily.

The catalysed reaction is uridine(54) in tRNA + S-adenosyl-L-methionine = 5-methyluridine(54) in tRNA + S-adenosyl-L-homocysteine + H(+). The enzyme catalyses uridine(341) in tmRNA + S-adenosyl-L-methionine = 5-methyluridine(341) in tmRNA + S-adenosyl-L-homocysteine + H(+). Dual-specificity methyltransferase that catalyzes the formation of 5-methyluridine at position 54 (m5U54) in all tRNAs, and that of position 341 (m5U341) in tmRNA (transfer-mRNA). The protein is tRNA/tmRNA (uracil-C(5))-methyltransferase of Aliivibrio salmonicida (strain LFI1238) (Vibrio salmonicida (strain LFI1238)).